The sequence spans 292 residues: 4-hydroxy-tetrahydrodipicolinate synthase (292 aa).

Threonine 44 contributes to the pyruvate binding site. The active-site Proton donor/acceptor is tyrosine 132. Catalysis depends on lysine 161, which acts as the Schiff-base intermediate with substrate. Isoleucine 203 is a binding site for pyruvate.

The protein belongs to the DapA family. Homotetramer; dimer of dimers.

It is found in the cytoplasm. The catalysed reaction is L-aspartate 4-semialdehyde + pyruvate = (2S,4S)-4-hydroxy-2,3,4,5-tetrahydrodipicolinate + H2O + H(+). The protein operates within amino-acid biosynthesis; L-lysine biosynthesis via DAP pathway; (S)-tetrahydrodipicolinate from L-aspartate: step 3/4. In terms of biological role, catalyzes the condensation of (S)-aspartate-beta-semialdehyde [(S)-ASA] and pyruvate to 4-hydroxy-tetrahydrodipicolinate (HTPA). The protein is 4-hydroxy-tetrahydrodipicolinate synthase of Fervidobacterium nodosum (strain ATCC 35602 / DSM 5306 / Rt17-B1).